Consider the following 538-residue polypeptide: Putative outer membrane porin BglH (538 aa).

The first 25 residues, 1–25, serve as a signal peptide directing secretion; sequence MFRQNLITSAILLMAPLAFSAQSLA. The segment at 52–82 is disordered; that stretch reads KDEEKKKYTPATVNRSVSTNDQGYAANPFPT. The span at 62 to 73 shows a compositional bias: polar residues; it reads ATVNRSVSTNDQ.

The protein belongs to the porin LamB (TC 1.B.3) family.

It is found in the cell outer membrane. Functionally, may be a sugar porin with a broad carbohydrate specificity. The sequence is that of Putative outer membrane porin BglH (bglH) from Shigella flexneri.